Here is a 425-residue protein sequence, read N- to C-terminus: MIDQRLVRDNPEVIAQQLKRRGKSIDLTGLQLIARQQRGLEEERSTLQADGNRVGKEVGLKIKGGADPNGEEVAALRQQGNAIKQKVAVFEEEEKALSSQLRDQLLSLPNLPSPLCPDGKSEDDNVEVRRWGTPRIEEGLEEHWQIAQRLNLFDTERSVRIAQSRFVTLMGQGARLERALINFMLDLHTSKGYREVMPPVLVNTASLTGSGQLPKFAEESFRCADDDLWLTPTAEVPVTSLHRDEIIPADQLPLRYSAYSPCFRREAGSYGRDTRGLIRLHQFNKVELYWFVHPDQSEEAHQQITADAEAVLQALDLPYRVLDLCTGDLGFSAQRTYDLEVWLPGAGAFREISSCSVCGDFQARRSAIRTKDGKQTKLVHTLNGSGLAVGRTMAALLETGQQPDGSILLPKPLVPYVGFERLQPE.

233 to 235 is an L-serine binding site; the sequence is TAE. 264-266 serves as a coordination point for ATP; the sequence is RRE. L-serine is bound at residue E287. An ATP-binding site is contributed by 351–354; the sequence is EISS. S385 provides a ligand contact to L-serine.

This sequence belongs to the class-II aminoacyl-tRNA synthetase family. Type-1 seryl-tRNA synthetase subfamily. In terms of assembly, homodimer. The tRNA molecule binds across the dimer.

It is found in the cytoplasm. The catalysed reaction is tRNA(Ser) + L-serine + ATP = L-seryl-tRNA(Ser) + AMP + diphosphate + H(+). It carries out the reaction tRNA(Sec) + L-serine + ATP = L-seryl-tRNA(Sec) + AMP + diphosphate + H(+). It functions in the pathway aminoacyl-tRNA biosynthesis; selenocysteinyl-tRNA(Sec) biosynthesis; L-seryl-tRNA(Sec) from L-serine and tRNA(Sec): step 1/1. Functionally, catalyzes the attachment of serine to tRNA(Ser). Is also able to aminoacylate tRNA(Sec) with serine, to form the misacylated tRNA L-seryl-tRNA(Sec), which will be further converted into selenocysteinyl-tRNA(Sec). This Synechococcus sp. (strain CC9902) protein is Serine--tRNA ligase.